A 288-amino-acid polypeptide reads, in one-letter code: MQLIVVSGRSGSGKTVALRVLEDLGYYCVDNLPVNLLPQLIVSVESQYDKLAVSIDVRNLPVSADKLETLLAQVRNEGRVEFSSFFFDAENSTLLKRYGESRRLHPLSRKQLSLDEAIREETNLLAPLSSTADLRIDTTSLSIHDLSELIKTRVLGKKENELVLVFESFGFKYGIPKDADFVFDARFLPNPHWIPELKPFTGKDEPVARYLSSQPDVMQFILQIENMLATWLPHLERNNRSYVTVGIGCTGGQHRSVFIAEQLAGAFRLLGKNVQIRHRTLDKSTPQH.

Residue 8–15 (GRSGSGKT) participates in ATP binding. 56-59 (DVRN) contacts GTP.

Belongs to the RapZ-like family.

In terms of biological role, displays ATPase and GTPase activities. The sequence is that of Nucleotide-binding protein ASA_0318 from Aeromonas salmonicida (strain A449).